We begin with the raw amino-acid sequence, 89 residues long: Small ribosomal subunit protein uS15 (89 aa).

Belongs to the universal ribosomal protein uS15 family. In terms of assembly, part of the 30S ribosomal subunit. Forms a bridge to the 50S subunit in the 70S ribosome, contacting the 23S rRNA.

In terms of biological role, one of the primary rRNA binding proteins, it binds directly to 16S rRNA where it helps nucleate assembly of the platform of the 30S subunit by binding and bridging several RNA helices of the 16S rRNA. Its function is as follows. Forms an intersubunit bridge (bridge B4) with the 23S rRNA of the 50S subunit in the ribosome. This Heliobacterium modesticaldum (strain ATCC 51547 / Ice1) protein is Small ribosomal subunit protein uS15.